We begin with the raw amino-acid sequence, 225 residues long: C-reactive protein (225 aa).

A signal peptide spans 1–20; it reads MEKLLWCFLTLVSFSNMSDQ. Residues 24 to 225 enclose the Pentraxin (PTX) domain; sequence HKKAFVFPKE…EVHVKPQLWP (202 aa). C55 and C116 are disulfide-bonded. N80, Q158, D159, and Q169 together coordinate Ca(2+).

The protein belongs to the pentraxin family. As to quaternary structure, homopentamer. Pentraxin (or pentaxin) have a discoid arrangement of 5 non-covalently bound subunits. Interacts with FCN1; may regulate monocyte activation by FCN1. Requires Ca(2+) as cofactor. In terms of tissue distribution, found in plasma.

The protein localises to the secreted. Displays several functions associated with host defense: it promotes agglutination, bacterial capsular swelling, phagocytosis and complement fixation through its calcium-dependent binding to phosphorylcholine. Can interact with DNA and histones and may scavenge nuclear material released from damaged circulating cells. This is C-reactive protein (CRP) from Oryctolagus cuniculus (Rabbit).